The chain runs to 351 residues: Glycerol-3-phosphate dehydrogenase [NAD(P)+] (351 aa).

Ser-18, Trp-19, Arg-38, and Lys-122 together coordinate NADPH. The sn-glycerol 3-phosphate site is built by Lys-122, Gly-153, and Ser-155. NADPH is bound at residue Ala-157. Positions 208, 261, 271, 272, and 273 each coordinate sn-glycerol 3-phosphate. Lys-208 (proton acceptor) is an active-site residue. Arg-272 provides a ligand contact to NADPH. Glu-297 lines the NADPH pocket.

Belongs to the NAD-dependent glycerol-3-phosphate dehydrogenase family.

The protein localises to the cytoplasm. It catalyses the reaction sn-glycerol 3-phosphate + NAD(+) = dihydroxyacetone phosphate + NADH + H(+). The catalysed reaction is sn-glycerol 3-phosphate + NADP(+) = dihydroxyacetone phosphate + NADPH + H(+). The protein operates within membrane lipid metabolism; glycerophospholipid metabolism. Its function is as follows. Catalyzes the reduction of the glycolytic intermediate dihydroxyacetone phosphate (DHAP) to sn-glycerol 3-phosphate (G3P), the key precursor for phospholipid synthesis. In Bordetella pertussis (strain Tohama I / ATCC BAA-589 / NCTC 13251), this protein is Glycerol-3-phosphate dehydrogenase [NAD(P)+].